We begin with the raw amino-acid sequence, 618 residues long: Pyocin-S1 (618 aa).

Belongs to the colicin/pyosin nuclease family. Purified pyocin S1 makes up a complex of the two (large and small) proteins. The large protein, but not the pyocin complex, shows in vitro DNase activity.

In terms of biological role, causes breakdown of chromosomal DNA as well as complete inhibition of lipid synthesis in sensitive cells. This Pseudomonas aeruginosa protein is Pyocin-S1 (pys1).